The following is a 415-amino-acid chain: Elongation factor Tu, chloroplastic (415 aa).

The 205-residue stretch at 13-217 (KIHLNVGTIG…HLDLYLPTPR (205 aa)) folds into the tr-type G domain. A G1 region spans residues 22–29 (GHFSHGKT). Residue 22–29 (GHFSHGKT) coordinates GTP. T29 provides a ligand contact to Mg(2+). Residues 63-67 (NMSIY) are G2. Residues 84–87 (DCPG) are G3. GTP-binding positions include 84–88 (DCPGH) and 139–142 (NKED). The G4 stretch occupies residues 139–142 (NKED). The tract at residues 177–179 (SAL) is G5.

The protein belongs to the TRAFAC class translation factor GTPase superfamily. Classic translation factor GTPase family. EF-Tu/EF-1A subfamily.

The protein resides in the plastid. The protein localises to the chloroplast. The catalysed reaction is GTP + H2O = GDP + phosphate + H(+). Its function is as follows. GTP hydrolase that promotes the GTP-dependent binding of aminoacyl-tRNA to the A-site of ribosomes during protein biosynthesis. The sequence is that of Elongation factor Tu, chloroplastic (tufA) from Coleochaete orbicularis (Charophycean green alga).